The chain runs to 493 residues: Glutamate--tRNA ligase (493 aa).

The 'HIGH' region signature appears at 10–20; the sequence is PSPTGTPHVGL. Positions 254 to 258 match the 'KMSKS' region motif; the sequence is KLSKR. ATP is bound at residue K257.

Belongs to the class-I aminoacyl-tRNA synthetase family. Glutamate--tRNA ligase type 1 subfamily. In terms of assembly, monomer.

It localises to the cytoplasm. The enzyme catalyses tRNA(Glu) + L-glutamate + ATP = L-glutamyl-tRNA(Glu) + AMP + diphosphate. Functionally, catalyzes the attachment of glutamate to tRNA(Glu) in a two-step reaction: glutamate is first activated by ATP to form Glu-AMP and then transferred to the acceptor end of tRNA(Glu). The protein is Glutamate--tRNA ligase of Corynebacterium efficiens (strain DSM 44549 / YS-314 / AJ 12310 / JCM 11189 / NBRC 100395).